Here is an 864-residue protein sequence, read N- to C-terminus: Protein translocase subunit SecA (864 aa).

Residues Q87, 105 to 109, and D512 each bind ATP; that span reads GEGKT.

Belongs to the SecA family. Monomer and homodimer. Part of the essential Sec protein translocation apparatus which comprises SecA, SecYEG and auxiliary proteins SecDF-YajC and YidC.

It is found in the cell inner membrane. The protein resides in the cytoplasm. The enzyme catalyses ATP + H2O + cellular proteinSide 1 = ADP + phosphate + cellular proteinSide 2.. Functionally, part of the Sec protein translocase complex. Interacts with the SecYEG preprotein conducting channel. Has a central role in coupling the hydrolysis of ATP to the transfer of proteins into and across the cell membrane, serving as an ATP-driven molecular motor driving the stepwise translocation of polypeptide chains across the membrane. This is Protein translocase subunit SecA from Buchnera aphidicola subsp. Cinara cedri (strain Cc).